The sequence spans 229 residues: Putative N-acetylmannosamine-6-phosphate 2-epimerase (229 aa).

This sequence belongs to the NanE family.

It catalyses the reaction an N-acyl-D-glucosamine 6-phosphate = an N-acyl-D-mannosamine 6-phosphate. Its pathway is amino-sugar metabolism; N-acetylneuraminate degradation; D-fructose 6-phosphate from N-acetylneuraminate: step 3/5. Its function is as follows. Converts N-acetylmannosamine-6-phosphate (ManNAc-6-P) to N-acetylglucosamine-6-phosphate (GlcNAc-6-P). This Salmonella agona (strain SL483) protein is Putative N-acetylmannosamine-6-phosphate 2-epimerase.